We begin with the raw amino-acid sequence, 369 residues long: WAT1-related protein At3g53210 (369 aa).

10 helical membrane-spanning segments follow: residues 12-31, 39-59, 72-92, 103-123, 133-153, 182-202, 214-234, 252-272, 278-298, and 303-323; these read IAMV…MRYA, LVFP…SAYF, FLIQ…GFYI, ASAT…LLGI, GIAK…ITLY, WTLG…WIVL, FSFV…ISAY, ALLY…IYVV, LFVS…ATLA, and FYLG…LVVM. EamA domains follow at residues 24-150 and 194-323; these read NHVI…SLVI and LCWS…LVVM. A disordered region spans residues 348–369; that stretch reads GDEEDYHNNKPRSPISQPLISS.

Belongs to the drug/metabolite transporter (DMT) superfamily. Plant drug/metabolite exporter (P-DME) (TC 2.A.7.4) family.

The protein localises to the membrane. The sequence is that of WAT1-related protein At3g53210 from Arabidopsis thaliana (Mouse-ear cress).